Here is a 304-residue protein sequence, read N- to C-terminus: D-alanine--D-alanine ligase (304 aa).

The ATP-grasp domain occupies 104–299; sequence KMVWLSCGLP…FEALCLAILA (196 aa). 130–185 contacts ATP; that stretch reads ARDLGLPIFVKPVHEGSSMGATKVTEAGQLRAAWELAARYDSLVIAEEFISGQELT. Mg(2+) is bound by residues aspartate 253, glutamate 266, and asparagine 268.

Belongs to the D-alanine--D-alanine ligase family. The cofactor is Mg(2+). It depends on Mn(2+) as a cofactor.

Its subcellular location is the cytoplasm. It carries out the reaction 2 D-alanine + ATP = D-alanyl-D-alanine + ADP + phosphate + H(+). It participates in cell wall biogenesis; peptidoglycan biosynthesis. Functionally, cell wall formation. The sequence is that of D-alanine--D-alanine ligase from Azoarcus sp. (strain BH72).